Reading from the N-terminus, the 249-residue chain is Triosephosphate isomerase (249 aa).

9-11 (NWK) is a binding site for substrate. His94 functions as the Electrophile in the catalytic mechanism. Glu166 (proton acceptor) is an active-site residue. Residues Gly172, Ser211, and 232–233 (GG) contribute to the substrate site.

Belongs to the triosephosphate isomerase family. As to quaternary structure, homodimer.

It localises to the cytoplasm. It carries out the reaction D-glyceraldehyde 3-phosphate = dihydroxyacetone phosphate. It functions in the pathway carbohydrate biosynthesis; gluconeogenesis. It participates in carbohydrate degradation; glycolysis; D-glyceraldehyde 3-phosphate from glycerone phosphate: step 1/1. Involved in the gluconeogenesis. Catalyzes stereospecifically the conversion of dihydroxyacetone phosphate (DHAP) to D-glyceraldehyde-3-phosphate (G3P). This is Triosephosphate isomerase from Dechloromonas aromatica (strain RCB).